A 216-amino-acid chain; its full sequence is Orotate phosphoribosyltransferase (216 aa).

Lys30 is a 5-phospho-alpha-D-ribose 1-diphosphate binding site. Orotate is bound at residue 38–39 (FF). Residues 75–76 (YK), Arg102, Lys103, Lys106, His108, and 128–136 (DDVITAGTA) contribute to the 5-phospho-alpha-D-ribose 1-diphosphate site. Orotate is bound by residues Thr132 and Arg160.

This sequence belongs to the purine/pyrimidine phosphoribosyltransferase family. PyrE subfamily. As to quaternary structure, homodimer. It depends on Mg(2+) as a cofactor.

The enzyme catalyses orotidine 5'-phosphate + diphosphate = orotate + 5-phospho-alpha-D-ribose 1-diphosphate. The protein operates within pyrimidine metabolism; UMP biosynthesis via de novo pathway; UMP from orotate: step 1/2. Functionally, catalyzes the transfer of a ribosyl phosphate group from 5-phosphoribose 1-diphosphate to orotate, leading to the formation of orotidine monophosphate (OMP). This is Orotate phosphoribosyltransferase from Acinetobacter baumannii (strain AB307-0294).